The chain runs to 339 residues: Anthranilate phosphoribosyltransferase (339 aa).

Residues Gly-81, 84 to 85, Ser-89, 91 to 94, 109 to 117, and Ala-121 each bind 5-phospho-alpha-D-ribose 1-diphosphate; these read GD, NVST, and KHGNRALSS. Gly-81 provides a ligand contact to anthranilate. Ser-93 contacts Mg(2+). Residue Asn-112 participates in anthranilate binding. Residue Arg-167 participates in anthranilate binding. The Mg(2+) site is built by Asp-226 and Glu-227.

It belongs to the anthranilate phosphoribosyltransferase family. As to quaternary structure, homodimer. Requires Mg(2+) as cofactor.

It catalyses the reaction N-(5-phospho-beta-D-ribosyl)anthranilate + diphosphate = 5-phospho-alpha-D-ribose 1-diphosphate + anthranilate. Its pathway is amino-acid biosynthesis; L-tryptophan biosynthesis; L-tryptophan from chorismate: step 2/5. In terms of biological role, catalyzes the transfer of the phosphoribosyl group of 5-phosphorylribose-1-pyrophosphate (PRPP) to anthranilate to yield N-(5'-phosphoribosyl)-anthranilate (PRA). The chain is Anthranilate phosphoribosyltransferase from Rhodopseudomonas palustris (strain BisB18).